A 218-amino-acid polypeptide reads, in one-letter code: Protein Syd (218 aa).

Belongs to the Syd family.

It is found in the cell inner membrane. Interacts with the SecY protein in vivo. May bind preferentially to an uncomplexed state of SecY, thus functioning either as a chelating agent for excess SecY in the cell or as a regulatory factor that negatively controls the translocase function. The protein is Protein Syd of Shewanella denitrificans (strain OS217 / ATCC BAA-1090 / DSM 15013).